A 950-amino-acid polypeptide reads, in one-letter code: General transcription factor II-I repeat domain-containing protein 2 (950 aa).

2 GTF2I-like repeats span residues 100–194 and 324–418; these read QVDS…QPGG and LSSL…SNVG.

Belongs to the TFII-I family.

The protein resides in the nucleus. The chain is General transcription factor II-I repeat domain-containing protein 2 (GTF2IRD2) from Bos taurus (Bovine).